We begin with the raw amino-acid sequence, 873 residues long: MQTADTKDKTKLSTGAAEHTPLMKQFFAAKSDYPDLLLFFRMGDFYELFYDDARKAARLLDITLTQRGSSGGAPIPMAGVPVHAYEGYLARLVALGESVAICEQIGDPALAKGLVERKVVRIVTPGTVTDEALLDERRDTLLMAISRSKQGYGLAWADLAGGRFLVNEVDSVDALEAEIARLEPAELLVPDEDNWPEFLRGRVGVRRRPPWLFDADSGRRQLLAFFKLHDLSGFGIDDKPCATAAAGALLGYVEETQKQRLPHLTSIAMEVASEAISMNAATRRHLELDTRVDGDTRNTLLGVLDSTVTPMGGRLLRRWLHRPLRLREVLVQRHHAVGSLIDTGADTDVREAFRALGDLERILTRVALRSARPRDFSTLRDGLALLPKVRTILAPLDSPRLQTLYAELGEHDATAHLLISAVAEQPPLKFSDGGVIATGYDADLDELRRLSTNADQFLIDLEQRERASSGIATLKVGYNRVHGYYIEISKGQAEKAPLHYSRRQTLTNAERYITEELKSFEDKVLSARERSLSREKLLYEGLLDALGGELEGLKRCASALSELDVLAGFAERAQALDWSQPELESAPCLHIERGRHPVVEAVRDQPFEPNDLDLHPDRRMLVITGPNMGGKSTYMRQNALIVLLAHIGSYVPASRAVIGPIDRILTRIGAGDDLARGQSTFMVEMAETSYILHHATPQSLVLMDEIGRGTSTYDGLALADAVARHLAHTNRCYTLFATHYFELTALADASHAGGGSGIANVHLDAVEHGERLVFMHAVKDGPANRSFGLQVAALAGLPKAAVQQARRRLAELEQRGGDSHAAEMAPAALDAPQQFGLFTAPSSAAQEALQALDPDELTPKQALEALYRLKALL.

Residue 625–632 participates in ATP binding; sequence GPNMGGKS.

The protein belongs to the DNA mismatch repair MutS family.

In terms of biological role, this protein is involved in the repair of mismatches in DNA. It is possible that it carries out the mismatch recognition step. This protein has a weak ATPase activity. This is DNA mismatch repair protein MutS from Xanthomonas campestris pv. campestris (strain 8004).